A 162-amino-acid polypeptide reads, in one-letter code: 2-C-methyl-D-erythritol 2,4-cyclodiphosphate synthase (162 aa).

Residues D8 and H10 each coordinate a divalent metal cation. 4-CDP-2-C-methyl-D-erythritol 2-phosphate-binding positions include D8–H10 and H36–S37. H44 serves as a coordination point for a divalent metal cation. 4-CDP-2-C-methyl-D-erythritol 2-phosphate is bound by residues D58 to G60, F63 to D67, A102 to A108, T134 to E137, F141, and R144.

Belongs to the IspF family. In terms of assembly, homotrimer. A divalent metal cation serves as cofactor.

It carries out the reaction 4-CDP-2-C-methyl-D-erythritol 2-phosphate = 2-C-methyl-D-erythritol 2,4-cyclic diphosphate + CMP. The protein operates within isoprenoid biosynthesis; isopentenyl diphosphate biosynthesis via DXP pathway; isopentenyl diphosphate from 1-deoxy-D-xylulose 5-phosphate: step 4/6. Functionally, involved in the biosynthesis of isopentenyl diphosphate (IPP) and dimethylallyl diphosphate (DMAPP), two major building blocks of isoprenoid compounds. Catalyzes the conversion of 4-diphosphocytidyl-2-C-methyl-D-erythritol 2-phosphate (CDP-ME2P) to 2-C-methyl-D-erythritol 2,4-cyclodiphosphate (ME-CPP) with a corresponding release of cytidine 5-monophosphate (CMP). The chain is 2-C-methyl-D-erythritol 2,4-cyclodiphosphate synthase from Yersinia enterocolitica serotype O:8 / biotype 1B (strain NCTC 13174 / 8081).